We begin with the raw amino-acid sequence, 244 residues long: 5-oxoprolinase subunit A (244 aa).

Belongs to the LamB/PxpA family. In terms of assembly, forms a complex composed of PxpA, PxpB and PxpC.

The catalysed reaction is 5-oxo-L-proline + ATP + 2 H2O = L-glutamate + ADP + phosphate + H(+). Its function is as follows. Catalyzes the cleavage of 5-oxoproline to form L-glutamate coupled to the hydrolysis of ATP to ADP and inorganic phosphate. The polypeptide is 5-oxoprolinase subunit A (Salmonella schwarzengrund (strain CVM19633)).